Reading from the N-terminus, the 118-residue chain is Large ribosomal subunit protein uL18 (118 aa).

The protein belongs to the universal ribosomal protein uL18 family. Part of the 50S ribosomal subunit; part of the 5S rRNA/L5/L18/L25 subcomplex. Contacts the 5S and 23S rRNAs.

In terms of biological role, this is one of the proteins that bind and probably mediate the attachment of the 5S RNA into the large ribosomal subunit, where it forms part of the central protuberance. In Rhizorhabdus wittichii (strain DSM 6014 / CCUG 31198 / JCM 15750 / NBRC 105917 / EY 4224 / RW1) (Sphingomonas wittichii), this protein is Large ribosomal subunit protein uL18.